The sequence spans 256 residues: Thiazole synthase (256 aa).

Lys95 serves as the catalytic Schiff-base intermediate with DXP. 1-deoxy-D-xylulose 5-phosphate-binding positions include Gly156, 182–183 (AG), and 204–205 (NT).

The protein belongs to the ThiG family. As to quaternary structure, homotetramer. Forms heterodimers with either ThiH or ThiS.

The protein resides in the cytoplasm. It carries out the reaction [ThiS sulfur-carrier protein]-C-terminal-Gly-aminoethanethioate + 2-iminoacetate + 1-deoxy-D-xylulose 5-phosphate = [ThiS sulfur-carrier protein]-C-terminal Gly-Gly + 2-[(2R,5Z)-2-carboxy-4-methylthiazol-5(2H)-ylidene]ethyl phosphate + 2 H2O + H(+). The protein operates within cofactor biosynthesis; thiamine diphosphate biosynthesis. Functionally, catalyzes the rearrangement of 1-deoxy-D-xylulose 5-phosphate (DXP) to produce the thiazole phosphate moiety of thiamine. Sulfur is provided by the thiocarboxylate moiety of the carrier protein ThiS. In vitro, sulfur can be provided by H(2)S. This Escherichia coli O7:K1 (strain IAI39 / ExPEC) protein is Thiazole synthase.